Consider the following 373-residue polypeptide: Probable cysteine protease RD19C (373 aa).

Residues 1–20 (MDRVVFFFLIAATLLAGSLG) form the signal peptide. The propeptide at 21–139 (STVISGEVTD…QTAPILPTSD (119 aa)) is activation peptide. Disulfide bonds link cysteine 161-cysteine 211 and cysteine 195-cysteine 245. Cysteine 164 is an active-site residue. An N-linked (GlcNAc...) asparagine glycan is attached at asparagine 258. Cysteine 301 and cysteine 356 are joined by a disulfide. Residues histidine 307 and asparagine 334 contribute to the active site.

The protein belongs to the peptidase C1 family.

It localises to the lytic vacuole. Functionally, probable thiol protease. The polypeptide is Probable cysteine protease RD19C (Arabidopsis thaliana (Mouse-ear cress)).